The primary structure comprises 118 residues: Ribonuclease P protein component (118 aa).

The protein belongs to the RnpA family. Consists of a catalytic RNA component (M1 or rnpB) and a protein subunit.

The enzyme catalyses Endonucleolytic cleavage of RNA, removing 5'-extranucleotides from tRNA precursor.. In terms of biological role, RNaseP catalyzes the removal of the 5'-leader sequence from pre-tRNA to produce the mature 5'-terminus. It can also cleave other RNA substrates such as 4.5S RNA. The protein component plays an auxiliary but essential role in vivo by binding to the 5'-leader sequence and broadening the substrate specificity of the ribozyme. The polypeptide is Ribonuclease P protein component (Shewanella denitrificans (strain OS217 / ATCC BAA-1090 / DSM 15013)).